Reading from the N-terminus, the 195-residue chain is ATP-dependent Clp protease proteolytic subunit 2 (195 aa).

Ser-98 functions as the Nucleophile in the catalytic mechanism. His-123 is a catalytic residue.

Belongs to the peptidase S14 family. In terms of assembly, fourteen ClpP subunits assemble into 2 heptameric rings which stack back to back to give a disk-like structure with a central cavity, resembling the structure of eukaryotic proteasomes.

It localises to the cytoplasm. It catalyses the reaction Hydrolysis of proteins to small peptides in the presence of ATP and magnesium. alpha-casein is the usual test substrate. In the absence of ATP, only oligopeptides shorter than five residues are hydrolyzed (such as succinyl-Leu-Tyr-|-NHMec, and Leu-Tyr-Leu-|-Tyr-Trp, in which cleavage of the -Tyr-|-Leu- and -Tyr-|-Trp bonds also occurs).. Cleaves peptides in various proteins in a process that requires ATP hydrolysis. Has a chymotrypsin-like activity. Plays a major role in the degradation of misfolded proteins. The polypeptide is ATP-dependent Clp protease proteolytic subunit 2 (Rhodopirellula baltica (strain DSM 10527 / NCIMB 13988 / SH1)).